Reading from the N-terminus, the 269-residue chain is Formamidopyrimidine-DNA glycosylase (269 aa).

Proline 2 functions as the Schiff-base intermediate with DNA in the catalytic mechanism. Catalysis depends on glutamate 3, which acts as the Proton donor. The active-site Proton donor; for beta-elimination activity is lysine 57. Histidine 90, arginine 109, and lysine 150 together coordinate DNA. The FPG-type zinc-finger motif lies at 235–269 (QVYGRKGEPCRVCGTPIVATKHAQRATFYCRHCQK). Catalysis depends on arginine 259, which acts as the Proton donor; for delta-elimination activity.

The protein belongs to the FPG family. As to quaternary structure, monomer. Requires Zn(2+) as cofactor.

The enzyme catalyses Hydrolysis of DNA containing ring-opened 7-methylguanine residues, releasing 2,6-diamino-4-hydroxy-5-(N-methyl)formamidopyrimidine.. It catalyses the reaction 2'-deoxyribonucleotide-(2'-deoxyribose 5'-phosphate)-2'-deoxyribonucleotide-DNA = a 3'-end 2'-deoxyribonucleotide-(2,3-dehydro-2,3-deoxyribose 5'-phosphate)-DNA + a 5'-end 5'-phospho-2'-deoxyribonucleoside-DNA + H(+). In terms of biological role, involved in base excision repair of DNA damaged by oxidation or by mutagenic agents. Acts as a DNA glycosylase that recognizes and removes damaged bases. Has a preference for oxidized purines, such as 7,8-dihydro-8-oxoguanine (8-oxoG). Has AP (apurinic/apyrimidinic) lyase activity and introduces nicks in the DNA strand. Cleaves the DNA backbone by beta-delta elimination to generate a single-strand break at the site of the removed base with both 3'- and 5'-phosphates. The protein is Formamidopyrimidine-DNA glycosylase of Salmonella heidelberg (strain SL476).